Reading from the N-terminus, the 199-residue chain is Recombination protein RecR (199 aa).

Residues 57-72 form a C4-type zinc finger; that stretch reads CQSCRTYTEESLCPIC. One can recognise a Toprim domain in the interval 81–176; the sequence is STICVVETPA…VISRIAHGVP (96 aa).

It belongs to the RecR family.

In terms of biological role, may play a role in DNA repair. It seems to be involved in an RecBC-independent recombinational process of DNA repair. It may act with RecF and RecO. This chain is Recombination protein RecR, found in Shewanella sp. (strain ANA-3).